The chain runs to 121 residues: Small ribosomal subunit protein uS13 (121 aa).

Residues 91–121 (HRKGLPMRGQRTRTNARTRKGPRKAGVALKK) form a disordered region.

It belongs to the universal ribosomal protein uS13 family. Part of the 30S ribosomal subunit. Forms a loose heterodimer with protein S19. Forms two bridges to the 50S subunit in the 70S ribosome.

Its function is as follows. Located at the top of the head of the 30S subunit, it contacts several helices of the 16S rRNA. In the 70S ribosome it contacts the 23S rRNA (bridge B1a) and protein L5 of the 50S subunit (bridge B1b), connecting the 2 subunits; these bridges are implicated in subunit movement. Contacts the tRNAs in the A and P-sites. The polypeptide is Small ribosomal subunit protein uS13 (Cupriavidus necator (strain ATCC 17699 / DSM 428 / KCTC 22496 / NCIMB 10442 / H16 / Stanier 337) (Ralstonia eutropha)).